The following is a 374-amino-acid chain: Type II methyltransferase M.NgoFVII (374 aa).

Positions 16–344 (PKILSLFSGC…KSILPIFSDN (329 aa)) constitute an SAM-dependent MTase C5-type domain. C88 is an active-site residue.

Belongs to the class I-like SAM-binding methyltransferase superfamily. C5-methyltransferase family.

It carries out the reaction a 2'-deoxycytidine in DNA + S-adenosyl-L-methionine = a 5-methyl-2'-deoxycytidine in DNA + S-adenosyl-L-homocysteine + H(+). Functionally, a methylase, recognizes the double-stranded sequence 5'-GCSGC-3', methylates C-5 on both strands, and protects the DNA from cleavage by the NgoFVII endonuclease. The sequence is that of Type II methyltransferase M.NgoFVII (ngoFVIIM) from Neisseria gonorrhoeae.